A 231-amino-acid chain; its full sequence is MRLVIARCSVDYTGRLTAHLPLATRLLLVKADSSVLVHSDGGSYKPLNWMSPPCTLRVAEPDDDDVGRGVREVWTVQNAKSDDRLVVRIHDVLSDSSHDLGVDPGLVKDGVEAHLQALLAEQIDLLGSGHVLVRREFPTAIGPVDILARSAAGETVAVEIKRRGDIDGVEQLTRYLELLGRDPLLAPVQGVFAAQEIKPQARVLAQDRGIRCLVLDYDAMRGLDDVDSRLF.

This sequence belongs to the NucS endonuclease family.

The protein localises to the cytoplasm. In terms of biological role, cleaves both 3' and 5' ssDNA extremities of branched DNA structures. The polypeptide is Endonuclease NucS (Beutenbergia cavernae (strain ATCC BAA-8 / DSM 12333 / CCUG 43141 / JCM 11478 / NBRC 16432 / NCIMB 13614 / HKI 0122)).